A 35-amino-acid chain; its full sequence is MRMICIRCDKPLKSRVPSRQCQCKDPIKAEEHTEK.

This is an uncharacterized protein from Escherichia coli (Bacteriophage T3).